The chain runs to 1100 residues: Isoleucine--tRNA ligase (1100 aa).

Positions 48–58 (PFATGLPHFGH) match the 'HIGH' region motif. Positions 626–630 (KMSKS) match the 'KMSKS' region motif. Position 629 (Lys629) interacts with ATP.

The protein belongs to the class-I aminoacyl-tRNA synthetase family. IleS type 2 subfamily. In terms of assembly, monomer. Zn(2+) serves as cofactor.

The protein localises to the cytoplasm. The enzyme catalyses tRNA(Ile) + L-isoleucine + ATP = L-isoleucyl-tRNA(Ile) + AMP + diphosphate. Its function is as follows. Catalyzes the attachment of isoleucine to tRNA(Ile). As IleRS can inadvertently accommodate and process structurally similar amino acids such as valine, to avoid such errors it has two additional distinct tRNA(Ile)-dependent editing activities. One activity is designated as 'pretransfer' editing and involves the hydrolysis of activated Val-AMP. The other activity is designated 'posttransfer' editing and involves deacylation of mischarged Val-tRNA(Ile). This Treponema denticola (strain ATCC 35405 / DSM 14222 / CIP 103919 / JCM 8153 / KCTC 15104) protein is Isoleucine--tRNA ligase.